Consider the following 1342-residue polypeptide: MVYSYTEKKRIRKDFGKRPQVLDVPYLLSIQLDSFQKFIEQDPEGQNGLEAAFRSVFPIQSYSGSSELQYVSYRLGEPVFDVKECQIRGVTYSAPLRVKLRLVIYEREAPEGTVKDIKEQEVYMGEIPLMTDNGTFVINGTERVIVSQLHRSPGVFFDSDKGKTHSSGKVLYNARIIPYRGSWLDFEFDPKDNLFVRIDRRRKLPATIILRAMNYSTEEILNLFFSKTIFEIRDNRLQMTLVPERLRGETASFDIEANGKVYVEKGRRITARHIRQLEKDEVNRIEVPVEYIAGKVVARDYIDVNTGEIICAANMELSLDLLARLSQSGHKSIETLFTNDLDHGAYISETLRVDPTNDRLSALVEIYRMMRPGEPPTREAAENLFENLFFSEDRYDLSAVGRMKFNRSLSREEVEGSGILSKDDIIDVMKKLIDIRNGKGEVDDIDHLGNRRIRSVGEMAENQFRVGLVRVERAVKERLSLGDLDTLMPQDMINAKPISAAVKEFFGSSQLSQFMDQNNPLSEITHKRRISALGPGGLTRERAGFEVRDVHPTHYGRVCPIETPEGPNIGLINSLSVYAQTNEYGFLETPYRLVRDGVVTDEIHYLSAIEEGNFVIAQANTVLDDEGHFVEDLITCRNYGESSLFNREQVEYMDVSTQQVVSVGASLIPFLEHDDANRALMGANMQRQAVPTLRADKPLVGTGMERAVAVDSGVTSVAKRGGVVQYVDASRIVIKVNEDEMYPGEAGIDIYNLTKYTRSNQNTCINQMPCVSLGEPVERGDVLADGPSTDLGELALGQNMRVAFMPWNGYNFEDSILVSERVVQEDRFTTIHIQELACVSRDTKLGPEEITADIPNVGEAALSKLDESGIVYIGAEVTGGDILVGKVTPKGETQLTPEEKLLRAIFGEKASDVKDSSLRVPNGVSGTVIDVQVFTRDGVEKDKRALEIEEMQLRQAKKDLTEELQIFEAGLFARIRSVLIAGGIEAEKLDKLPRERWLELGLADEEKQNQLEQLAEQYDELKAEFEKKLDAKRRKITQGDDLAPGVLKIVKVYLAVKRQIQPGDKMAGRHGNKGVISKINPIEDMPYDENGTPVDIVLNPLGVPSRMNIGQILETHLGMAAKGIGDKINAMLKQQQEVAKLREFIQKAYNLGDETRQKVDLSTFSDEEVMRLAENLKKGMPIATPVFDGAKEKEIKELLKLGDLPTSGQITLFDGRTGEQFERQVTVGYMYMLKLNHLVDDKMHARSTGSYSLVTQQPLGGKAQFGGQRFGEMEVWALEAYGAAYTLQEMLTVKSDDVNGRTKMYKNIVDGNHQMEPGMPESFNVLLKEIRSLGINIELEGE.

Belongs to the RNA polymerase beta chain family. In terms of assembly, the RNAP catalytic core consists of 2 alpha, 1 beta, 1 beta' and 1 omega subunit. When a sigma factor is associated with the core the holoenzyme is formed, which can initiate transcription.

The enzyme catalyses RNA(n) + a ribonucleoside 5'-triphosphate = RNA(n+1) + diphosphate. Its function is as follows. DNA-dependent RNA polymerase catalyzes the transcription of DNA into RNA using the four ribonucleoside triphosphates as substrates. In Photorhabdus laumondii subsp. laumondii (strain DSM 15139 / CIP 105565 / TT01) (Photorhabdus luminescens subsp. laumondii), this protein is DNA-directed RNA polymerase subunit beta.